Consider the following 427-residue polypeptide: Tumor necrosis factor receptor superfamily member 16 (427 aa).

Residues 1 to 28 (MGAGATGRAMDGPRLLLLLLLGVSLGGA) form the signal peptide. Residues 29–250 (KEACPTGLYT…PVVTRGTTDN (222 aa)) are Extracellular-facing. 4 TNFR-Cys repeats span residues 31-64 (ACPT…QTVC), 66-107 (PCLD…DAVC), 108-146 (RCAY…NTVC), and 148-188 (ECPD…DAEC). 12 disulfides stabilise this stretch: C32–C43, C44–C57, C47–C64, C67–C83, C86–C99, C89–C107, C109–C122, C125–C138, C128–C146, C149–C164, C167–C180, and C170–C188. N-linked (GlcNAc...) asparagine glycosylation occurs at N60. The tract at residues 194 to 219 (RWITRSTPPEGSDSTAPSTQEPEAPP) is disordered. Polar residues predominate over residues 197 to 214 (TRSTPPEGSDSTAPSTQE). Residues 251–272 (LIPVYCSILAAVVVGLVAYIAF) form a helical membrane-spanning segment. Residues 273–427 (KRWNSCKQNK…CSESTATSPV (155 aa)) lie on the Cytoplasmic side of the membrane. Composition is skewed to polar residues over residues 281-291 (NKQGANSRPVN) and 305-326 (SGIS…TASG). The interval 281 to 338 (NKQGANSRPVNQTPPPEGEKLHSDSGISVDSQSLHDQQPHTQTASGQALKGDGGLYSS) is disordered. At S311 the chain carries Phosphoserine. The mediates interaction with KIDINS220 stretch occupies residues 326–341 (GQALKGDGGLYSSLPP). A Death domain is found at 344–421 (REEVEKLLNG…DLVESLCSES (78 aa)).

As to quaternary structure, homodimer; disulfide-linked. Heterodimer with SORCS2. The extracellular domains of the heterodimer bind NGF. The cytoplasmic region of the heterodimer binds TRIO. NGF binding mediates dissociation of TRIO from the receptor complex. Interacts with RTN4R. Interacts with TRAF2, TRAF4, TRAF6, PTPN13 and RANBP9. Interacts through TRAF6 with SQSTM1 which bridges NGFR to NTRK1. Interacts with BEX1. Interacts with BEX3. Interacts with KIDINS220 and NTRK1. Can form a ternary complex with NTRK1 and KIDINS220 and this complex is affected by the expression levels of KIDINS220. An increase in KIDINS220 expression leads to a decreased association of NGFR and NTRK1. Interacts with NTRK2; may regulate the ligand specificity of the NTRK2 receptor. Interacts (via death domain) with RAB31. Interacts with LINGO1. Interacts with NRADD. Interacts with MAGED1; the interaction antagonizes the association NGFR:NTRK1. Interacts (via death domain) with ARHGDIA and RIPK2. Interacts with BFAR. In terms of processing, N- and O-glycosylated. Post-translationally, O-linked glycans consist of Gal(1-3)GalNAc core elongated by 1 or 2 NeuNAc. Phosphorylated on serine residues.

The protein resides in the cell membrane. The protein localises to the cytoplasm. It localises to the perikaryon. It is found in the cell projection. Its subcellular location is the growth cone. The protein resides in the dendritic spine. Functionally, low affinity receptor which can bind to NGF, BDNF, NTF3, and NTF4. Forms a heterodimeric receptor with SORCS2 that binds the precursor forms of NGF, BDNF and NTF3 with high affinity, and has much lower affinity for mature NGF and BDNF. Plays an important role in differentiation and survival of specific neuronal populations during development. Can mediate cell survival as well as cell death of neural cells. Plays a role in the inactivation of RHOA. Plays a role in the regulation of the translocation of GLUT4 to the cell surface in adipocytes and skeletal muscle cells in response to insulin, probably by regulating RAB31 activity, and thereby contributes to the regulation of insulin-dependent glucose uptake. Necessary for the circadian oscillation of the clock genes BMAL1, PER1, PER2 and NR1D1 in the suprachiasmatic nucleus (SCmgetaN) of the brain and in liver and of the genes involved in glucose and lipid metabolism in the liver. Together with BFAR negatively regulates NF-kappa-B and JNK-related signaling pathways. This chain is Tumor necrosis factor receptor superfamily member 16 (NGFR), found in Homo sapiens (Human).